The sequence spans 140 residues: Nucleoside diphosphate kinase (140 aa).

Residues Lys11, Phe59, Arg87, Thr93, Arg104, and Asn114 each contribute to the ATP site. The active-site Pros-phosphohistidine intermediate is the His117.

This sequence belongs to the NDK family. In terms of assembly, homotetramer. Requires Mg(2+) as cofactor.

The protein localises to the cytoplasm. It catalyses the reaction a 2'-deoxyribonucleoside 5'-diphosphate + ATP = a 2'-deoxyribonucleoside 5'-triphosphate + ADP. It carries out the reaction a ribonucleoside 5'-diphosphate + ATP = a ribonucleoside 5'-triphosphate + ADP. Its function is as follows. Major role in the synthesis of nucleoside triphosphates other than ATP. The ATP gamma phosphate is transferred to the NDP beta phosphate via a ping-pong mechanism, using a phosphorylated active-site intermediate. This Rhizobium etli (strain ATCC 51251 / DSM 11541 / JCM 21823 / NBRC 15573 / CFN 42) protein is Nucleoside diphosphate kinase.